The sequence spans 769 residues: Sensor histidine kinase ComP (769 aa).

At 1–9 the chain is on the cytoplasmic side; sequence MKNLIKKFT. Residues 10-33 traverse the membrane as a helical segment; that stretch reads IAVIVLSILYISYTTYISMNGIII. The Extracellular portion of the chain corresponds to 34 to 113; that stretch reads GTKIHKNDKS…DFDLVTLNRP (80 aa). The chain crosses the membrane as a helical span at residues 114–134; sequence YSFFLFVLPLFFYFLSIICIF. The Cytoplasmic segment spans residues 135-144; the sequence is YILKVNKKRR. The helical transmembrane segment at 145–167 threads the bilayer; the sequence is SFAAYILILLLLDISIAYISAGG. Residues 168–235 lie on the Extracellular side of the membrane; it reads PFRGHIINRY…QDYLQVDIDF (68 aa). Residues 236-257 traverse the membrane as a helical segment; that stretch reads LATLNLVSFATLTLFSFSAIYL. Residues 258–272 lie on the Cytoplasmic side of the membrane; the sequence is HLNKYKYAEHSFILK. The chain crosses the membrane as a helical span at residues 273-295; the sequence is LLILTNTLSFAPFLIFFVLPIIF. The Extracellular segment spans residues 296 to 299; that stretch reads TGNY. The helical transmembrane segment at 300–323 threads the bilayer; it reads IFPALASASLLVLIPFGLVYQFVA. Topologically, residues 324-337 are cytoplasmic; the sequence is NKMFDIEFILGRMR. Residues 338 to 357 traverse the membrane as a helical segment; that stretch reads YYALLAMIPTLLIVGALVLF. At 358–361 the chain is on the extracellular side; sequence DVMD. The chain crosses the membrane as a helical span at residues 362-383; it reads IQMNPVRQTVFFFVVMFAVFYF. The Cytoplasmic segment spans residues 384-769; it reads KEVMDFKFRL…GFKADIEIEL (386 aa). A Histidine kinase domain is found at 571 to 769; sequence LARDLHDSVL…GFKADIEIEL (199 aa). H576 carries the post-translational modification Phosphohistidine; by autocatalysis.

Post-translationally, autophosphorylates on a histidine and transfers the phosphate group onto an aspartate in ComA, thus activating it.

The protein resides in the cell membrane. It catalyses the reaction ATP + protein L-histidine = ADP + protein N-phospho-L-histidine.. In terms of biological role, sensor in the two-component regulatory system ComP/ComA involved in a major quorum response pathway that regulates the development of genetic competence. Plays a role in sporulation, at least partly interchangeable with that of SpoIIJ. Probably activates ComA by phosphorylation. This chain is Sensor histidine kinase ComP (comP), found in Bacillus subtilis (strain 168).